We begin with the raw amino-acid sequence, 412 residues long: Argininosuccinate synthase (412 aa).

Position 10–18 (10–18 (AYSGGLDTS)) interacts with ATP. Tyr89 provides a ligand contact to L-citrulline. Gly119 contacts ATP. L-aspartate contacts are provided by Thr121, Asn125, and Asp126. Asn125 is an L-citrulline binding site. The L-citrulline site is built by Arg129, Ser177, Glu261, and Tyr273.

This sequence belongs to the argininosuccinate synthase family. Type 1 subfamily. In terms of assembly, homotetramer.

The protein resides in the cytoplasm. It catalyses the reaction L-citrulline + L-aspartate + ATP = 2-(N(omega)-L-arginino)succinate + AMP + diphosphate + H(+). The protein operates within amino-acid biosynthesis; L-arginine biosynthesis; L-arginine from L-ornithine and carbamoyl phosphate: step 2/3. This Bifidobacterium longum (strain DJO10A) protein is Argininosuccinate synthase.